The chain runs to 682 residues: Transcription factor 12 (682 aa).

The short motif at 19–27 is the 9aaTAD element; sequence DLLDFSAMF. Disordered stretches follow at residues 25–122, 140–219, and 281–313; these read AMFS…LYSR, LGSP…PPTS, and SVSPTDINTSLPPMSSFHRGSTSSSPYVAASHT. Composition is skewed to polar residues over residues 30–48 and 56–76; these read PVNSGKTRPTTLGSSQFSG and GTTSWGTSGQPSPSYDSSRGF. 3 positions are modified to phosphoserine: Ser47, Ser67, and Ser79. The span at 81 to 93 shows a compositional bias: basic and acidic residues; that stretch reads HYSDHLNDSRLGA. Ser98 carries the post-translational modification Phosphoserine. Polar residues-rich tracts occupy residues 101–121 and 144–163; these read PFMNSNLMGKTSERGSFSLYS and AQLSSSGKPGTAYYSFSATS. Lys110 participates in a covalent cross-link: Glycyl lysine isopeptide (Lys-Gly) (interchain with G-Cter in SUMO2). Ser116 is subject to Phosphoserine. Residues 119-140 form a leucine-zipper region; that stretch reads LYSRDTGLPGCQSSLLRQDLGL. Lys181 participates in a covalent cross-link: Glycyl lysine isopeptide (Lys-Gly) (interchain with G-Cter in SUMO2). Residues 182–196 are interaction with RUNX1T1; it reads KVRKVPPGLPSSVYA. The span at 282 to 306 shows a compositional bias: polar residues; the sequence is VSPTDINTSLPPMSSFHRGSTSSSP. Phosphothreonine is present on Thr313. Ser333 carries the post-translational modification Phosphoserine. 2 disordered regions span residues 349-395 and 462-580; these read PDHT…SLHS and SASM…ERRM. Residues 352–363 show a composition bias toward low complexity; it reads TSSSFPSNPSTP. Polar residues-rich tracts occupy residues 364–376 and 383–395; these read VGSPSPLTGTSQW and APSSPSYENSLHS. Residues 481 to 492 show a composition bias toward low complexity; sequence SVLSSTVTTSST. The segment covering 506–517 has biased composition (polar residues); it reads LQSQSGTVVTTE. Composition is skewed to basic and acidic residues over residues 518-530 and 536-551; these read IKTENKEKDENLH and DDMKSDDESSQKDIKV. Lys519 is covalently cross-linked (Glycyl lysine isopeptide (Lys-Gly) (interchain with G-Cter in SUMO2)). Position 540 is a phosphoserine (Ser540). Lys550 participates in a covalent cross-link: Glycyl lysine isopeptide (Lys-Gly) (interchain with G-Cter in SUMO2). A Phosphothreonine modification is found at Thr557. Phosphoserine is present on residues Ser558 and Ser559. Over residues 568 to 580 the composition is skewed to basic and acidic residues; it reads PEQKIEREKERRM. Residues 577–630 enclose the bHLH domain; that stretch reads ERRMANNARERLRVRDINEAFKELGRMCQLHLKSEKPQTKLLILHQAVAVILSL. Glycyl lysine isopeptide (Lys-Gly) (interchain with G-Cter in SUMO2) cross-links involve residues Lys609 and Lys653. The segment at 632-655 is class A specific domain; sequence QQVRERNLNPKAACLKRREEEKVS. Residues 651 to 682 form a disordered region; that stretch reads EEKVSAVSAEPPTTLPGTHPGLSETTNPMGHM. A compositionally biased stretch (low complexity) spans 661–672; it reads PPTTLPGTHPGL. The span at 673–682 shows a compositional bias: polar residues; sequence SETTNPMGHM.

In terms of assembly, efficient DNA binding requires dimerization with another bHLH protein. Forms homo- or heterooligomers with myogenin, E12 and ITF2 proteins. Interacts with PTF1A. Interacts with NEUROD2. Interacts with RUNX1T1. Interacts with AML1-MTG8/ETO (via nervy homology region 2 in oligomerized form). Interacts with BHLHA9. As to expression, expressed in several tissues and cell types including skeletal muscle, thymus, and a B-cell line.

The protein localises to the nucleus. In terms of biological role, transcriptional regulator. Involved in the initiation of neuronal differentiation. Activates transcription by binding to the E box (5'-CANNTG-3'). May be involved in the functional network that regulates the development of the GnRH axis. This Homo sapiens (Human) protein is Transcription factor 12 (TCF12).